A 454-amino-acid chain; its full sequence is Photosystem II CP47 reaction center protein (454 aa).

Transmembrane regions (helical) follow at residues 6–26 (MFVL…GWTI), 47–61 (IILS…IWHW), 86–102 (GIHL…FGAF), 149–164 (IAAG…FHLS), 183–198 (VLSS…AFVV), and 403–418 (SFAL…HGAR).

This sequence belongs to the PsbB/PsbC family. PsbB subfamily. As to quaternary structure, PSII is composed of 1 copy each of membrane proteins PsbA, PsbB, PsbC, PsbD, PsbE, PsbF, PsbH, PsbI, PsbJ, PsbK, PsbL, PsbM, PsbT, PsbX, PsbY, PsbZ, Psb30/Ycf12, at least 3 peripheral proteins of the oxygen-evolving complex and a large number of cofactors. It forms dimeric complexes. The cofactor is Binds multiple chlorophylls. PSII binds additional chlorophylls, carotenoids and specific lipids..

The protein localises to the plastid. It is found in the chloroplast thylakoid membrane. One of the components of the core complex of photosystem II (PSII). It binds chlorophyll and helps catalyze the primary light-induced photochemical processes of PSII. PSII is a light-driven water:plastoquinone oxidoreductase, using light energy to abstract electrons from H(2)O, generating O(2) and a proton gradient subsequently used for ATP formation. This Ostreococcus tauri protein is Photosystem II CP47 reaction center protein.